Consider the following 264-residue polypeptide: S-adenosylmethionine decarboxylase proenzyme (264 aa).

The active-site Schiff-base intermediate with substrate; via pyruvic acid is Ser113. At Ser113 the chain carries Pyruvic acid (Ser); by autocatalysis. Residue His118 is the Proton acceptor; for processing activity of the active site. Catalysis depends on Cys141, which acts as the Proton donor; for catalytic activity.

The protein belongs to the prokaryotic AdoMetDC family. Type 2 subfamily. Heterooctamer of four alpha and four beta chains arranged as a tetramer of alpha/beta heterodimers. Requires pyruvate as cofactor. Post-translationally, is synthesized initially as an inactive proenzyme. Formation of the active enzyme involves a self-maturation process in which the active site pyruvoyl group is generated from an internal serine residue via an autocatalytic post-translational modification. Two non-identical subunits are generated from the proenzyme in this reaction, and the pyruvate is formed at the N-terminus of the alpha chain, which is derived from the carboxyl end of the proenzyme. The post-translation cleavage follows an unusual pathway, termed non-hydrolytic serinolysis, in which the side chain hydroxyl group of the serine supplies its oxygen atom to form the C-terminus of the beta chain, while the remainder of the serine residue undergoes an oxidative deamination to produce ammonia and the pyruvoyl group blocking the N-terminus of the alpha chain.

The catalysed reaction is S-adenosyl-L-methionine + H(+) = S-adenosyl 3-(methylsulfanyl)propylamine + CO2. The protein operates within amine and polyamine biosynthesis; S-adenosylmethioninamine biosynthesis; S-adenosylmethioninamine from S-adenosyl-L-methionine: step 1/1. Catalyzes the decarboxylation of S-adenosylmethionine to S-adenosylmethioninamine (dcAdoMet), the propylamine donor required for the synthesis of the polyamines spermine and spermidine from the diamine putrescine. This is S-adenosylmethionine decarboxylase proenzyme from Pseudomonas aeruginosa (strain UCBPP-PA14).